Consider the following 461-residue polypeptide: Transcription factor phm6 (461 aa).

Residues 18 to 50 constitute a DNA-binding region (zn(2)-C6 fungal-type); sequence CNRCRNHKLKCVVTEAPNGTACCQRCIRAMVPC. Disordered stretches follow at residues 55–79 and 256–278; these read RERKKRGSSPRVVPQSPWMHSPWET and LQTDDSSSTQSESSRSRASVGAT. Over residues 256–274 the composition is skewed to low complexity; that stretch reads LQTDDSSSTQSESSRSRAS.

It localises to the nucleus. In terms of biological role, transcription factor that regulates the expression of the gene cluster that mediates the biosynthesis of the trans-fused decalin-containing tetramic acid phomasetin. The sequence is that of Transcription factor phm6 from Pyrenochaetopsis sp.